Here is a 255-residue protein sequence, read N- to C-terminus: 4-hydroxy-tetrahydrodipicolinate reductase (255 aa).

Residues 8–13 (GASGRM), 89–91 (GTT), and 114–117 (SSNY) each bind NAD(+). The active-site Proton donor/acceptor is His-146. His-147 lines the (S)-2,3,4,5-tetrahydrodipicolinate pocket. Lys-150 (proton donor) is an active-site residue. Residue 156–157 (GT) coordinates (S)-2,3,4,5-tetrahydrodipicolinate.

The protein belongs to the DapB family.

The protein localises to the cytoplasm. The enzyme catalyses (S)-2,3,4,5-tetrahydrodipicolinate + NAD(+) + H2O = (2S,4S)-4-hydroxy-2,3,4,5-tetrahydrodipicolinate + NADH + H(+). It catalyses the reaction (S)-2,3,4,5-tetrahydrodipicolinate + NADP(+) + H2O = (2S,4S)-4-hydroxy-2,3,4,5-tetrahydrodipicolinate + NADPH + H(+). It functions in the pathway amino-acid biosynthesis; L-lysine biosynthesis via DAP pathway; (S)-tetrahydrodipicolinate from L-aspartate: step 4/4. Its function is as follows. Catalyzes the conversion of 4-hydroxy-tetrahydrodipicolinate (HTPA) to tetrahydrodipicolinate. The protein is 4-hydroxy-tetrahydrodipicolinate reductase of Methanoregula boonei (strain DSM 21154 / JCM 14090 / 6A8).